The primary structure comprises 40 residues: Photosystem II reaction center protein J (40 aa).

The chain crosses the membrane as a helical span at residues 10–30; it reads LWLIGTVAGILVIGLVGIFFY.

This sequence belongs to the PsbJ family. PSII is composed of 1 copy each of membrane proteins PsbA, PsbB, PsbC, PsbD, PsbE, PsbF, PsbH, PsbI, PsbJ, PsbK, PsbL, PsbM, PsbT, PsbX, PsbY, PsbZ, Psb30/Ycf12, at least 3 peripheral proteins of the oxygen-evolving complex and a large number of cofactors. It forms dimeric complexes.

The protein localises to the plastid. The protein resides in the chloroplast thylakoid membrane. Functionally, one of the components of the core complex of photosystem II (PSII). PSII is a light-driven water:plastoquinone oxidoreductase that uses light energy to abstract electrons from H(2)O, generating O(2) and a proton gradient subsequently used for ATP formation. It consists of a core antenna complex that captures photons, and an electron transfer chain that converts photonic excitation into a charge separation. This Marchantia polymorpha (Common liverwort) protein is Photosystem II reaction center protein J.